Consider the following 473-residue polypeptide: Ribulose bisphosphate carboxylase large chain 3 (473 aa).

Substrate-binding residues include Asn116 and Thr166. Catalysis depends on Lys168, which acts as the Proton acceptor. Residue Lys170 coordinates substrate. 3 residues coordinate Mg(2+): Lys194, Asp196, and Glu197. Lys194 carries the post-translational modification N6-carboxylysine. The active-site Proton acceptor is the His287. The substrate site is built by Arg288, His320, and Ser372.

The protein belongs to the RuBisCO large chain family. Type I subfamily. As to quaternary structure, heterohexadecamer of 8 large chains and 8 small chains. It depends on Mg(2+) as a cofactor.

The enzyme catalyses 2 (2R)-3-phosphoglycerate + 2 H(+) = D-ribulose 1,5-bisphosphate + CO2 + H2O. It catalyses the reaction D-ribulose 1,5-bisphosphate + O2 = 2-phosphoglycolate + (2R)-3-phosphoglycerate + 2 H(+). RuBisCO catalyzes two reactions: the carboxylation of D-ribulose 1,5-bisphosphate, the primary event in carbon dioxide fixation, as well as the oxidative fragmentation of the pentose substrate. Both reactions occur simultaneously and in competition at the same active site. This is Ribulose bisphosphate carboxylase large chain 3 from Nitrobacter hamburgensis (strain DSM 10229 / NCIMB 13809 / X14).